A 138-amino-acid chain; its full sequence is Ribosome-binding factor A (138 aa).

Residues 119–138 form a disordered region; that stretch reads DMDEKKNSDEKRDSDEKLED.

The protein belongs to the RbfA family. In terms of assembly, monomer. Binds 30S ribosomal subunits, but not 50S ribosomal subunits or 70S ribosomes.

It is found in the cytoplasm. In terms of biological role, one of several proteins that assist in the late maturation steps of the functional core of the 30S ribosomal subunit. Associates with free 30S ribosomal subunits (but not with 30S subunits that are part of 70S ribosomes or polysomes). Required for efficient processing of 16S rRNA. May interact with the 5'-terminal helix region of 16S rRNA. The chain is Ribosome-binding factor A from Alkaliphilus metalliredigens (strain QYMF).